Here is a 299-residue protein sequence, read N- to C-terminus: Regucalcin (299 aa).

A divalent metal cation is bound at residue Glu-18. Substrate contacts are provided by Arg-101, Asn-103, and Glu-121. A divalent metal cation contacts are provided by Asn-154 and Asp-204. Asp-204 serves as the catalytic Proton donor/acceptor. An N6-succinyllysine mark is found at Lys-244 and Lys-253.

Belongs to the SMP-30/CGR1 family. Monomer. Requires Zn(2+) as cofactor. Mn(2+) is required as a cofactor. Ca(2+) serves as cofactor. The cofactor is Mg(2+).

It is found in the cytoplasm. The enzyme catalyses D-glucono-1,5-lactone + H2O = D-gluconate + H(+). It participates in cofactor biosynthesis; L-ascorbate biosynthesis via UDP-alpha-D-glucuronate pathway; L-ascorbate from UDP-alpha-D-glucuronate: step 3/4. In terms of biological role, gluconolactonase with low activity towards other sugar lactones, including gulonolactone and galactonolactone. Catalyzes a key step in ascorbic acid (vitamin C) biosynthesis. Can also hydrolyze diisopropyl phosphorofluoridate and phenylacetate (in vitro). Calcium-binding protein. Modulates Ca(2+) signaling, and Ca(2+)-dependent cellular processes and enzyme activities. The polypeptide is Regucalcin (RGN) (Bos taurus (Bovine)).